The sequence spans 532 residues: Copalyl diphosphate synthase (532 aa).

The DXDDTA motif signature appears at D313–A318. A QXXDGSW motif motif is present at residues Q443 to W449.

It belongs to the terpene synthase family. The cofactor is Mg(2+).

The enzyme catalyses (2E,6E,10E)-geranylgeranyl diphosphate = (+)-copalyl diphosphate. Its function is as follows. Involved in the biosynthesis of the mercapturic acid derivative diterpene cyslabdan A, a potentiator of the beta-lactam antibiotic imipenem. Catalyzes the conversion of geranylgeranyl diphosphate (GGDP) into (+)-copalyl diphosphate. This is Copalyl diphosphate synthase from Streptomyces cyslabdanicus.